Here is a 286-residue protein sequence, read N- to C-terminus: MRDSRETFVNHAFVAGYPVKHSRSPLIHGYWLKRFGIQGSYRAHEVTSDAFPDFMRQIKEGTAGFCGGNVTIPHKEAAFRLSDRPDELSAELGAANTLWLENGTIRATNTDGRGFVANLDERAKGWDRISAAVILGAGGASRAVIQAIRDRGVKAIHVVNRTPERARELADRFGSAVHAHSMAALPEVLSGAGLFVNTTSLGMDGEPAPAIDFSKLARDAVVTDIVYVPLKTPLLRQAEEQGFRVVDGLGMLLHQAAPGFEKWFGLRPVVDEALREIIISDMDKHA.

Shikimate is bound by residues 22-24 and T71; that span reads SRS. The active-site Proton acceptor is the K75. NADP(+) is bound at residue E87. Shikimate is bound by residues N96 and D111. NADP(+)-binding positions include 136–140, 160–165, and I225; these read GAGGA and NRTPER. Position 227 (Y227) interacts with shikimate. Residue G248 participates in NADP(+) binding.

The protein belongs to the shikimate dehydrogenase family. As to quaternary structure, homodimer.

The enzyme catalyses shikimate + NADP(+) = 3-dehydroshikimate + NADPH + H(+). The protein operates within metabolic intermediate biosynthesis; chorismate biosynthesis; chorismate from D-erythrose 4-phosphate and phosphoenolpyruvate: step 4/7. Functionally, involved in the biosynthesis of the chorismate, which leads to the biosynthesis of aromatic amino acids. Catalyzes the reversible NADPH linked reduction of 3-dehydroshikimate (DHSA) to yield shikimate (SA). The chain is Shikimate dehydrogenase (NADP(+)) from Sinorhizobium medicae (strain WSM419) (Ensifer medicae).